Reading from the N-terminus, the 199-residue chain is MAELVSVAILGYLLGSIPVGFLMGKLRGIDVRRYGSGATGGTNVLRTLGPWAALFTVLCDIGKGLLAAYLGERLAGEWGFVAAGLLASLGHSYPVWLRFRGGKSVATSGGVMLLHYPLAVLVGIAAGALAVVPTRWVSLGSLTASLAVVLQLFLLDAPLSHRLLVVALAVVIYVRHWENMKRIAAGTENRLGVKARPRA.

5 helical membrane passes run 4–24 (LVSV…FLMG), 51–71 (WAAL…AYLG), 77–97 (EWGF…PVWL), 111–131 (VMLL…ALAV), and 152–172 (LFLL…AVVI).

The protein belongs to the PlsY family. In terms of assembly, probably interacts with PlsX.

It is found in the cell membrane. The enzyme catalyses an acyl phosphate + sn-glycerol 3-phosphate = a 1-acyl-sn-glycero-3-phosphate + phosphate. It functions in the pathway lipid metabolism; phospholipid metabolism. Functionally, catalyzes the transfer of an acyl group from acyl-phosphate (acyl-PO(4)) to glycerol-3-phosphate (G3P) to form lysophosphatidic acid (LPA). This enzyme utilizes acyl-phosphate as fatty acyl donor, but not acyl-CoA or acyl-ACP. In Symbiobacterium thermophilum (strain DSM 24528 / JCM 14929 / IAM 14863 / T), this protein is Glycerol-3-phosphate acyltransferase.